Here is a 127-residue protein sequence, read N- to C-terminus: Large ribosomal subunit protein eL8 (127 aa).

Belongs to the eukaryotic ribosomal protein eL8 family. As to quaternary structure, part of the 50S ribosomal subunit. Probably part of the RNase P complex.

The protein localises to the cytoplasm. Functionally, multifunctional RNA-binding protein that recognizes the K-turn motif in ribosomal RNA, the RNA component of RNase P, box H/ACA, box C/D and box C'/D' sRNAs. The chain is Large ribosomal subunit protein eL8 from Aeropyrum pernix (strain ATCC 700893 / DSM 11879 / JCM 9820 / NBRC 100138 / K1).